We begin with the raw amino-acid sequence, 337 residues long: Ribosomal RNA small subunit methyltransferase H (337 aa).

S-adenosyl-L-methionine is bound by residues 35 to 37 (GGY), Asp54, Phe81, Asp102, and Gln109. Residues 286-316 (PVGPSEAEAAANPRARSAKLRAGERTDAPAP) are disordered. Residues 289 to 300 (PSEAEAAANPRA) are compositionally biased toward low complexity.

This sequence belongs to the methyltransferase superfamily. RsmH family.

The protein resides in the cytoplasm. It carries out the reaction cytidine(1402) in 16S rRNA + S-adenosyl-L-methionine = N(4)-methylcytidine(1402) in 16S rRNA + S-adenosyl-L-homocysteine + H(+). Functionally, specifically methylates the N4 position of cytidine in position 1402 (C1402) of 16S rRNA. The polypeptide is Ribosomal RNA small subunit methyltransferase H (Methylobacterium sp. (strain 4-46)).